Consider the following 508-residue polypeptide: MGLPWYRVHTVVLNDPGRLLAVHIMHTALVSGWAGSMALYELAVFDPSDPVLDPMWRQGMFVIPFMTRLGITDSWGGWSISGGTVTNPGIWSYEGVAATHIVFSGLCFLAAIWHWVYWDLEIFSDERTGKPSLDLPKIFGIHLFLAGVACFGFGAFHVTGLYGPGIWVSDPYGLTGKVQAVNPAWGAEGFDPFVPGGIASHHIAAGTLGILAGLFHLSVRPPQRLYKGLRMGNIETVLSSSIAAVFFAAFVVAGTMWYGSATTPIELFGPTRYQWDQGYFQQEIYRRVSNGLAENLSLSEAWSKIPEKLAFYDYIGNNPAKGGLFRAGSMDNGDGIAVGWLGHPVFRDKEGRELFVRRMPTFFETFPVVLVDEEGIVRADVPFRRAESKYSVEQVGVTVEFYGGELNGVNYSDPATVKKYARRSQLGEIFELDRATLKSDGVFRSSPRGWFTFGHATFALLFFFGHIWHGARTLFRDVFAGIDPDLDAQVEFGTFQKVGDPTTKKQAV.

6 helical membrane passes run 21–36 (AVHI…WAGS), 101–115 (IVFS…IWHW), 140–156 (GIHL…FGAF), 203–218 (IAAG…FHLS), 237–252 (VLSS…AFVV), and 457–472 (TFAL…HGAR).

It belongs to the PsbB/PsbC family. PsbB subfamily. In terms of assembly, PSII is composed of 1 copy each of membrane proteins PsbA, PsbB, PsbC, PsbD, PsbE, PsbF, PsbH, PsbI, PsbJ, PsbK, PsbL, PsbM, PsbT, PsbX, PsbY, PsbZ, Psb30/Ycf12, at least 3 peripheral proteins of the oxygen-evolving complex and a large number of cofactors. It forms dimeric complexes. Requires Binds multiple chlorophylls. PSII binds additional chlorophylls, carotenoids and specific lipids. as cofactor.

Its subcellular location is the plastid. It localises to the chloroplast thylakoid membrane. Its function is as follows. One of the components of the core complex of photosystem II (PSII). It binds chlorophyll and helps catalyze the primary light-induced photochemical processes of PSII. PSII is a light-driven water:plastoquinone oxidoreductase, using light energy to abstract electrons from H(2)O, generating O(2) and a proton gradient subsequently used for ATP formation. The sequence is that of Photosystem II CP47 reaction center protein from Hordeum vulgare (Barley).